A 350-amino-acid chain; its full sequence is Protein memo-1 homolog (350 aa).

This sequence belongs to the MEMO1 family. In terms of assembly, interacts with rho-1. Expressed in neuronal and non-neuronal cells in the head and tail, pharyngeal cells, spermatheca, distal tip cells, anchor cell and the intestine.

Functionally, plays a role in the oxidative stress response and the maintenance of longevity by regulating the interaction between GTPase rho-1 and oxidase bli-3. In turn, this serves to modulate bli-3 activity and the control of reactive oxygen species production. May control cell migration by relaying extracellular chemotactic signals to the microtubule cytoskeleton. This Caenorhabditis elegans protein is Protein memo-1 homolog.